The sequence spans 241 residues: 1-(5-phosphoribosyl)-5-[(5-phosphoribosylamino)methylideneamino] imidazole-4-carboxamide isomerase (241 aa).

D10 (proton acceptor) is an active-site residue. Residue D131 is the Proton donor of the active site.

The protein belongs to the HisA/HisF family.

Its subcellular location is the cytoplasm. It carries out the reaction 1-(5-phospho-beta-D-ribosyl)-5-[(5-phospho-beta-D-ribosylamino)methylideneamino]imidazole-4-carboxamide = 5-[(5-phospho-1-deoxy-D-ribulos-1-ylimino)methylamino]-1-(5-phospho-beta-D-ribosyl)imidazole-4-carboxamide. It functions in the pathway amino-acid biosynthesis; L-histidine biosynthesis; L-histidine from 5-phospho-alpha-D-ribose 1-diphosphate: step 4/9. This is 1-(5-phosphoribosyl)-5-[(5-phosphoribosylamino)methylideneamino] imidazole-4-carboxamide isomerase from Bifidobacterium longum subsp. infantis (strain ATCC 15697 / DSM 20088 / JCM 1222 / NCTC 11817 / S12).